We begin with the raw amino-acid sequence, 147 residues long: Nucleoside diphosphate kinase (147 aa).

6 residues coordinate ATP: Lys9, Phe57, Arg85, Thr91, Arg102, and Asn112. His115 serves as the catalytic Pros-phosphohistidine intermediate.

Belongs to the NDK family. Homotetramer. Mg(2+) is required as a cofactor.

Its subcellular location is the cytoplasm. It carries out the reaction a 2'-deoxyribonucleoside 5'-diphosphate + ATP = a 2'-deoxyribonucleoside 5'-triphosphate + ADP. The catalysed reaction is a ribonucleoside 5'-diphosphate + ATP = a ribonucleoside 5'-triphosphate + ADP. Major role in the synthesis of nucleoside triphosphates other than ATP. The ATP gamma phosphate is transferred to the NDP beta phosphate via a ping-pong mechanism, using a phosphorylated active-site intermediate. This Fervidobacterium nodosum (strain ATCC 35602 / DSM 5306 / Rt17-B1) protein is Nucleoside diphosphate kinase.